The primary structure comprises 84 residues: Cell division topological specificity factor (84 aa).

This sequence belongs to the MinE family.

In terms of biological role, prevents the cell division inhibition by proteins MinC and MinD at internal division sites while permitting inhibition at polar sites. This ensures cell division at the proper site by restricting the formation of a division septum at the midpoint of the long axis of the cell. The protein is Cell division topological specificity factor of Burkholderia cenocepacia (strain HI2424).